The chain runs to 818 residues: Protein TOC75-3, chloroplastic (818 aa).

A chloroplast-targeting transit peptide spans 1–79; the sequence is MAAFSVNGQL…LKNLAKPLAV (79 aa). Positions 15–41 are enriched in low complexity; it reads TSSTASTSLSSRRKFLSPSSSRLPRIS. The segment at 15-67 is disordered; the sequence is TSSTASTSLSSRRKFLSPSSSRLPRISTQSPRVPSIKCSKSLPNRDTETSSKD. Residues 57 to 67 show a composition bias toward basic and acidic residues; it reads PNRDTETSSKD. A chloroplast; outer membrane-targeting transit peptide spans 80-140; the sequence is ASVSSAASFF…KLFSPSPAVA (61 aa). POTRA domains follow at residues 141-246, 247-364, and 365-448; these read DEEQ…FAES, TWQS…VVEG, and DITQ…LKEL. Topologically, residues 141–473 are chloroplast intermembrane; that stretch reads DEEQSPDWDS…GRGGAPTLAS (333 aa). The beta stranded transmembrane segment at 474–482 threads the bilayer; it reads FQPGGSVTF. Residues 483-509 are Cytoplasmic-facing; that stretch reads EHRNLQGLNRSLMGSVTTSNFLNPQDD. A beta stranded membrane pass occupies residues 510 to 518; the sequence is LSFKLEYVH. Over 519–562 the chain is Chloroplast intermembrane; the sequence is PYLDGVYNPRNRTFKTSCFNSRKLSPVFTGGPGVEEVPPIWVDR. Residues 563-570 traverse the membrane as a beta stranded segment; it reads AGVKANIT. At 571-578 the chain is on the cytoplasmic side; the sequence is ENFTRQSK. A beta stranded transmembrane segment spans residues 579-586; sequence FTYGLVME. Residues 587 to 693 are Chloroplast intermembrane-facing; that stretch reads EITTRDESSH…VEQGAGKSPP (107 aa). A beta stranded membrane pass occupies residues 694-702; sequence PVLVLHGHY. Topologically, residues 703–714 are cytoplasmic; it reads GGCVGDLPSYDA. A beta stranded membrane pass occupies residues 715-723; sequence FVLGGPYSV. The Chloroplast intermembrane segment spans residues 724–785; it reads RGYNMGELGA…VYRRTGQGSS (62 aa). The beta stranded transmembrane segment at 786–792 threads the bilayer; it reads YGAGVKL. The Cytoplasmic portion of the chain corresponds to 793-806; the sequence is GLVRAEYAVDHNNG. Residues 807-814 traverse the membrane as a beta stranded segment; it reads TGALFFRF. Over 815 to 818 the chain is Chloroplast intermembrane; it reads GERY.

It belongs to the TOC75 family. Part of the TOC core complex that includes a protein for the specific recognition of transit peptides surrounded by a ring composed of four proteins forming translocation channels, and four to five GTP-binding proteins providing energy. This core complex can interact with components of the TIC complex to form a larger import complex. Chloroplastic protein precursors such as prSS (precursor of the RuBisCO small subunit) also interact with these complexes. The TOC complex contains a specific subset of polar lipids such as digalactosyldiacylglyceride (DGDG), phosphatidylcholine (PC) and phosphatidylglycerol (PG). TOC75-3 interacts with TOC34/OEP34, TOC159/TOC86, TOC132 and TOC120. Interacts with SP1. Interacts with TIC236. As to expression, mostly expressed in young and actively dividing photosynthetic tissues and, to a lower extent, in old leaves and roots. Particularly low levels in leaves after etiolation.

The protein resides in the plastid. It localises to the chloroplast outer membrane. Essential protein. Mediates the insertion of proteins targeted to the outer membrane of chloroplasts. Required for the import of protein precursors into chloroplasts. Forms the voltage-dependent preprotein translocation channels (hydrophilic beta barrel) of the TOC complex in the chloroplastic outer membrane. This is Protein TOC75-3, chloroplastic from Arabidopsis thaliana (Mouse-ear cress).